The chain runs to 348 residues: Fe(3+) ions import ATP-binding protein FbpC (348 aa).

The ABC transporter domain maps to V7–M237. G39 to T46 serves as a coordination point for ATP.

It belongs to the ABC transporter superfamily. Fe(3+) ion importer (TC 3.A.1.10) family. The complex is composed of two ATP-binding proteins (FbpC), two transmembrane proteins (FbpB) and a solute-binding protein (FbpA).

It is found in the cell inner membrane. The enzyme catalyses Fe(3+)(out) + ATP + H2O = Fe(3+)(in) + ADP + phosphate + H(+). Part of the ABC transporter complex FbpABC involved in Fe(3+) ions import. Responsible for energy coupling to the transport system. The chain is Fe(3+) ions import ATP-binding protein FbpC from Escherichia coli (strain K12).